Here is a 271-residue protein sequence, read N- to C-terminus: Phosphatidylinositol transfer protein alpha isoform (271 aa).

Residues T59, K61, E86, N90, T97, and K195 each coordinate a 1,2-diacyl-sn-glycero-3-phospho-(1D-myo-inositol). K216 is modified (N6-acetyllysine). Basic and acidic residues predominate over residues 251-264 (TKRQLDEMRQKDPV). Residues 251–271 (TKRQLDEMRQKDPVKGMTADD) form a disordered region.

The protein belongs to the PtdIns transfer protein family. PI transfer class I subfamily. Phosphorylated by PKC in a calcium and phosphatidylserine-dependent manner.

It is found in the cytoplasm. The protein localises to the nucleus. It catalyses the reaction a 1,2-diacyl-sn-glycero-3-phosphocholine(in) = a 1,2-diacyl-sn-glycero-3-phosphocholine(out). The catalysed reaction is a 1,2-diacyl-sn-glycero-3-phospho-(1D-myo-inositol)(in) = a 1,2-diacyl-sn-glycero-3-phospho-(1D-myo-inositol)(out). Catalyzes the transfer of phosphatidylinositol (PI) and phosphatidylcholine (PC) between membranes. Shows a preference for PI and PC containing shorter saturated or monosaturated acyl chains at the sn-1 and sn-2 positions. Preference order for PC is C16:1 &gt; C16:0 &gt; C18:1 &gt; C18:0 &gt; C20:4 and for PI is C16:1 &gt; C16:0 &gt; C18:1 &gt; C18:0 &gt; C20:4 &gt; C20:3. The chain is Phosphatidylinositol transfer protein alpha isoform (Pitpna) from Mus musculus (Mouse).